The primary structure comprises 381 residues: Probable tRNA sulfurtransferase (381 aa).

In terms of domain architecture, THUMP spans 60 to 168 (REATEVLTRV…EGKAYIFVDK (109 aa)). Residues 186-187 (LL), K269, G291, and Q300 each bind ATP.

The protein belongs to the ThiI family.

It localises to the cytoplasm. It carries out the reaction [ThiI sulfur-carrier protein]-S-sulfanyl-L-cysteine + a uridine in tRNA + 2 reduced [2Fe-2S]-[ferredoxin] + ATP + H(+) = [ThiI sulfur-carrier protein]-L-cysteine + a 4-thiouridine in tRNA + 2 oxidized [2Fe-2S]-[ferredoxin] + AMP + diphosphate. The catalysed reaction is [ThiS sulfur-carrier protein]-C-terminal Gly-Gly-AMP + S-sulfanyl-L-cysteinyl-[cysteine desulfurase] + AH2 = [ThiS sulfur-carrier protein]-C-terminal-Gly-aminoethanethioate + L-cysteinyl-[cysteine desulfurase] + A + AMP + 2 H(+). It participates in cofactor biosynthesis; thiamine diphosphate biosynthesis. Catalyzes the ATP-dependent transfer of a sulfur to tRNA to produce 4-thiouridine in position 8 of tRNAs, which functions as a near-UV photosensor. Also catalyzes the transfer of sulfur to the sulfur carrier protein ThiS, forming ThiS-thiocarboxylate. This is a step in the synthesis of thiazole, in the thiamine biosynthesis pathway. The sulfur is donated as persulfide by IscS. This Thermococcus kodakarensis (strain ATCC BAA-918 / JCM 12380 / KOD1) (Pyrococcus kodakaraensis (strain KOD1)) protein is Probable tRNA sulfurtransferase.